The following is a 249-amino-acid chain: Probable transcriptional regulatory protein ZMO0153 (249 aa).

Belongs to the TACO1 family.

The protein resides in the cytoplasm. The chain is Probable transcriptional regulatory protein ZMO0153 from Zymomonas mobilis subsp. mobilis (strain ATCC 31821 / ZM4 / CP4).